A 519-amino-acid polypeptide reads, in one-letter code: GMP synthase [glutamine-hydrolyzing] (519 aa).

In terms of domain architecture, Glutamine amidotransferase type-1 spans 4–201 (AILILDFGSQ…VHDICDAGYD (198 aa)). Cysteine 81 acts as the Nucleophile in catalysis. Catalysis depends on residues histidine 175 and glutamate 177. Residues 202 to 394 (WNMPDYVEEA…LGLPRDLVFR (193 aa)) enclose the GMPS ATP-PPase domain. Position 229 to 235 (229 to 235 (SGGVDSS)) interacts with ATP.

Homodimer.

The enzyme catalyses XMP + L-glutamine + ATP + H2O = GMP + L-glutamate + AMP + diphosphate + 2 H(+). It functions in the pathway purine metabolism; GMP biosynthesis; GMP from XMP (L-Gln route): step 1/1. In terms of biological role, catalyzes the synthesis of GMP from XMP. The polypeptide is GMP synthase [glutamine-hydrolyzing] (Nitrosomonas eutropha (strain DSM 101675 / C91 / Nm57)).